We begin with the raw amino-acid sequence, 200 residues long: Holliday junction branch migration complex subunit RuvA (200 aa).

A domain I region spans residues 1 to 64; that stretch reads MFTYFRGELI…EDLMQLFGFL (64 aa). Residues 65–143 are domain II; that stretch reads EEEERQLFRL…KLRPSGGTKS (79 aa). Positions 144-148 are flexible linker; sequence VSRLS. The domain III stretch occupies residues 148–200; sequence SESSMRDDAVNALVTLGFLRSVAQKAVTESLTSLRNPQVEDLVRDALLTIRTP.

This sequence belongs to the RuvA family. As to quaternary structure, homotetramer. Forms an RuvA(8)-RuvB(12)-Holliday junction (HJ) complex. HJ DNA is sandwiched between 2 RuvA tetramers; dsDNA enters through RuvA and exits via RuvB. An RuvB hexamer assembles on each DNA strand where it exits the tetramer. Each RuvB hexamer is contacted by two RuvA subunits (via domain III) on 2 adjacent RuvB subunits; this complex drives branch migration. In the full resolvosome a probable DNA-RuvA(4)-RuvB(12)-RuvC(2) complex forms which resolves the HJ.

It is found in the cytoplasm. In terms of biological role, the RuvA-RuvB-RuvC complex processes Holliday junction (HJ) DNA during genetic recombination and DNA repair, while the RuvA-RuvB complex plays an important role in the rescue of blocked DNA replication forks via replication fork reversal (RFR). RuvA specifically binds to HJ cruciform DNA, conferring on it an open structure. The RuvB hexamer acts as an ATP-dependent pump, pulling dsDNA into and through the RuvAB complex. HJ branch migration allows RuvC to scan DNA until it finds its consensus sequence, where it cleaves and resolves the cruciform DNA. This Chlorobium phaeobacteroides (strain BS1) protein is Holliday junction branch migration complex subunit RuvA.